Consider the following 734-residue polypeptide: Subtilisin-like protease (734 aa).

A signal peptide spans 1–20; sequence MTCICIFSIAFLLSFHLTTA. The Inhibitor I9 domain maps to 28-109; sequence TYIVHVDKPD…AKLEKVLTLH (82 aa). Residues 114 to 591 form the Peptidase S8 domain; that stretch reads PNFLGLYQNM…AGHVNPSKAS (478 aa). Residue Asp141 is the Charge relay system of the active site. Residue Asn172 is glycosylated (N-linked (GlcNAc...) asparagine). Residue His199 is the Charge relay system of the active site. Asn222 and Asn306 each carry an N-linked (GlcNAc...) asparagine glycan. Positions 357–442 constitute a PA domain; that stretch reads PLVYPGTSDE…THVGYAAGEM (86 aa). Asn448 and Asn509 each carry an N-linked (GlcNAc...) asparagine glycan. Ser524 functions as the Charge relay system in the catalytic mechanism. Asn652 is a glycosylation site (N-linked (GlcNAc...) asparagine).

Belongs to the peptidase S8 family.

It localises to the secreted. Its subcellular location is the extracellular space. The protein localises to the apoplast. Functionally, required for arbuscular mycorrhiza (AM) development during AM symbiosis with AM fungi (e.g. Glomeromycota intraradices). The polypeptide is Subtilisin-like protease (Petunia hybrida (Petunia)).